The primary structure comprises 387 residues: MKNIVLIGSTGSIGRQTLEVIGSLPDRFKVVGLGSGKNWRLMAEQIRVFRPSAVAMAGEREIMNLKELLAGSYCPELGWGRTGMESLASMPEADLVVVAVTGFAGIYPTIAAIQAGKDVALANKETLVAAGHLVMKMAERHRAAILPVDSEHSAVWQCLCGRNSGEVEKIILTASGGPFREMCLEKLEKVTVDMALKHPNWNMGSKITIDSATLMNKGLEVIEAKWLFGLNYSQIEVVIHPQSIVHSAVEFLDGSVIAQMGLPDMRLPIQYALTYPERLPGSFPKLKLASLQGLTFEEPDTRRFPCLSLAFEAGLAGGTMPAVLNAANEVAVEFFLKGLLPFLGIPSVVRSVMEKHEMASDPGLEEIIEADRWARNMGVKVIRDLFN.

Positions 10, 11, 12, 13, 36, 37, 38, and 123 each coordinate NADPH. Position 124 (K124) interacts with 1-deoxy-D-xylulose 5-phosphate. E125 contacts NADPH. Position 149 (D149) interacts with Mn(2+). 1-deoxy-D-xylulose 5-phosphate contacts are provided by S150, E151, S175, and H198. E151 is a Mn(2+) binding site. Residue G204 participates in NADPH binding. 1-deoxy-D-xylulose 5-phosphate contacts are provided by S211, N216, K217, and E220. Residue E220 participates in Mn(2+) binding.

Belongs to the DXR family. Requires Mg(2+) as cofactor. Mn(2+) is required as a cofactor.

The catalysed reaction is 2-C-methyl-D-erythritol 4-phosphate + NADP(+) = 1-deoxy-D-xylulose 5-phosphate + NADPH + H(+). The protein operates within isoprenoid biosynthesis; isopentenyl diphosphate biosynthesis via DXP pathway; isopentenyl diphosphate from 1-deoxy-D-xylulose 5-phosphate: step 1/6. In terms of biological role, catalyzes the NADPH-dependent rearrangement and reduction of 1-deoxy-D-xylulose-5-phosphate (DXP) to 2-C-methyl-D-erythritol 4-phosphate (MEP). The chain is 1-deoxy-D-xylulose 5-phosphate reductoisomerase from Pelotomaculum thermopropionicum (strain DSM 13744 / JCM 10971 / SI).